A 232-amino-acid polypeptide reads, in one-letter code: Probable intron-encoded endonuclease aI3 (232 aa).

Belongs to the LAGLIDADG endonuclease family.

Its subcellular location is the mitochondrion. Functionally, mitochondrial DNA endonuclease involved in intron homing. The sequence is that of Probable intron-encoded endonuclease aI3 (aI3) from Dictyostelium discoideum (Social amoeba).